Here is an 89-residue protein sequence, read N- to C-terminus: Small ribosomal subunit protein uS15 (89 aa).

The protein belongs to the universal ribosomal protein uS15 family. In terms of assembly, part of the 30S ribosomal subunit. Forms a bridge to the 50S subunit in the 70S ribosome, contacting the 23S rRNA.

In terms of biological role, one of the primary rRNA binding proteins, it binds directly to 16S rRNA where it helps nucleate assembly of the platform of the 30S subunit by binding and bridging several RNA helices of the 16S rRNA. Functionally, forms an intersubunit bridge (bridge B4) with the 23S rRNA of the 50S subunit in the ribosome. The polypeptide is Small ribosomal subunit protein uS15 (Cupriavidus metallidurans (strain ATCC 43123 / DSM 2839 / NBRC 102507 / CH34) (Ralstonia metallidurans)).